Here is a 56-residue protein sequence, read N- to C-terminus: LAAVSVDCSEYPKPACTMEQRPLCGSDNKTYGNKCNFCNAVVESNGTLTLSHFGKC.

Residues 6 to 56 (VDCSEYPKPACTMEQRPLCGSDNKTYGNKCNFCNAVVESNGTLTLSHFGKC) enclose the Kazal-like domain. 3 disulfides stabilise this stretch: Cys8–Cys38, Cys16–Cys35, and Cys24–Cys56. N-linked (GlcNAc...) asparagine glycosylation occurs at Asn45.

It localises to the secreted. The sequence is that of Ovomucoid from Afropavo congensis (Congo peafowl).